Consider the following 194-residue polypeptide: Imidazoleglycerol-phosphate dehydratase (194 aa).

Belongs to the imidazoleglycerol-phosphate dehydratase family.

It is found in the cytoplasm. The enzyme catalyses D-erythro-1-(imidazol-4-yl)glycerol 3-phosphate = 3-(imidazol-4-yl)-2-oxopropyl phosphate + H2O. The protein operates within amino-acid biosynthesis; L-histidine biosynthesis; L-histidine from 5-phospho-alpha-D-ribose 1-diphosphate: step 6/9. In Clostridium kluyveri (strain NBRC 12016), this protein is Imidazoleglycerol-phosphate dehydratase.